The chain runs to 115 residues: Large ribosomal subunit protein bL19 (115 aa).

This sequence belongs to the bacterial ribosomal protein bL19 family.

Its function is as follows. This protein is located at the 30S-50S ribosomal subunit interface and may play a role in the structure and function of the aminoacyl-tRNA binding site. The polypeptide is Large ribosomal subunit protein bL19 (Francisella philomiragia subsp. philomiragia (strain ATCC 25017 / CCUG 19701 / FSC 153 / O#319-036)).